A 1523-amino-acid chain; its full sequence is Dicer-like protein 1 (1523 aa).

Residues 24–38 (LNLSGERTISTTEPT) are compositionally biased toward polar residues. Residues 24–58 (LNLSGERTISTTEPTEGNDSSSEESGDNEQISTQR) are disordered. A Helicase ATP-binding domain is found at 123–304 (LFERAKSQNT…ESATKLEVLL (182 aa)). 136 to 143 (LDTGSGKT) provides a ligand contact to ATP. Positions 249–252 (DEAH) match the DEAH box motif. One can recognise a Helicase C-terminal domain in the interval 444–617 (LLRQKLIKYF…GIDSEIDSIL (174 aa)). Positions 640 to 730 (ALAILARYAS…NSVYHRRLPA (91 aa)) constitute a Dicer dsRNA-binding fold domain. In terms of domain architecture, PAZ spans 879 to 1007 (ELLHLVHENE…VCIEPLRISA (129 aa)). RNase III domains lie at 1031–1190 (IALE…LSGG) and 1241–1392 (GRKV…VDSD). 3 residues coordinate Mg(2+): E1281, D1378, and E1381. A DRBM domain is found at 1426–1494 (TFLQNRLTNE…SEKALSVLEN (69 aa)). 4 residues coordinate Zn(2+): C1438, H1465, C1506, and C1508.

The protein belongs to the helicase family. Dicer subfamily. It depends on Mg(2+) as a cofactor. The cofactor is Mn(2+).

Its function is as follows. Dicer-like endonuclease involved in cleaving double-stranded RNA in the RNA interference (RNAi) pathway. Produces 21 to 25 bp dsRNAs (siRNAs) which target the selective destruction of homologous RNAs leading to sequence-specific suppression of gene expression, called post-transcriptional gene silencing (PTGS). Part of a broad host defense response against viral infection and transposons. This chain is Dicer-like protein 1 (dcl1), found in Aspergillus oryzae (strain ATCC 42149 / RIB 40) (Yellow koji mold).